Consider the following 760-residue polypeptide: Alpha-amylase (760 aa).

The N-terminal stretch at 1-34 (MSKRSKLLKRRMLSLSVICVLIGYGPVFNPVRSQ) is a signal peptide. 3 residues coordinate Ca(2+): Asn-143, Thr-184, and Asp-192. Catalysis depends on Asp-222, which acts as the Nucleophile. His-226 provides a ligand contact to Ca(2+). Catalysis depends on Glu-262, which acts as the Proton donor.

It belongs to the glycosyl hydrolase 13 family. In terms of assembly, monomer. Requires Ca(2+) as cofactor.

The enzyme catalyses Endohydrolysis of (1-&gt;4)-alpha-D-glucosidic linkages in polysaccharides containing three or more (1-&gt;4)-alpha-linked D-glucose units.. The chain is Alpha-amylase (amyA) from Clostridium acetobutylicum (strain ATCC 824 / DSM 792 / JCM 1419 / IAM 19013 / LMG 5710 / NBRC 13948 / NRRL B-527 / VKM B-1787 / 2291 / W).